The primary structure comprises 243 residues: MSSIYLGVNIDHIATLRNARGTKYPDPVHAAEIAERAGADGITIHLREDRRHILDRDVRILRETIQTRMNLEMAVTEEMVEIALKTKPEFVCLVPEKREELTTEGGLDVVGQLDKVKAATQKLTEAGIKVSLFIDADRQQIEAAKQCGAPFIELHTGHYADAETEEEQQAELKKIAAGASYADDLGIIVNAGHGLTYHNVAPIAALPEIYELNIGHSIIGRAVFDGLEKSVAEMKALMIAARK.

Asn9 contributes to the 3-amino-2-oxopropyl phosphate binding site. Residue 11–12 (DH) coordinates 1-deoxy-D-xylulose 5-phosphate. 3-amino-2-oxopropyl phosphate is bound at residue Arg20. His45 serves as the catalytic Proton acceptor. Arg47 and His52 together coordinate 1-deoxy-D-xylulose 5-phosphate. The active-site Proton acceptor is Glu72. Thr102 contributes to the 1-deoxy-D-xylulose 5-phosphate binding site. The active-site Proton donor is His193. Residues Gly194 and 215-216 (GH) each bind 3-amino-2-oxopropyl phosphate.

Belongs to the PNP synthase family. Homooctamer; tetramer of dimers.

The protein localises to the cytoplasm. It carries out the reaction 3-amino-2-oxopropyl phosphate + 1-deoxy-D-xylulose 5-phosphate = pyridoxine 5'-phosphate + phosphate + 2 H2O + H(+). It participates in cofactor biosynthesis; pyridoxine 5'-phosphate biosynthesis; pyridoxine 5'-phosphate from D-erythrose 4-phosphate: step 5/5. Catalyzes the complicated ring closure reaction between the two acyclic compounds 1-deoxy-D-xylulose-5-phosphate (DXP) and 3-amino-2-oxopropyl phosphate (1-amino-acetone-3-phosphate or AAP) to form pyridoxine 5'-phosphate (PNP) and inorganic phosphate. The polypeptide is Pyridoxine 5'-phosphate synthase (Vibrio parahaemolyticus serotype O3:K6 (strain RIMD 2210633)).